Reading from the N-terminus, the 163-residue chain is Ribosome maturation factor RimM (163 aa).

Residues 94 to 162 (ADEYYYIDLI…DHLVIAADFI (69 aa)) form the PRC barrel domain.

Belongs to the RimM family. Binds ribosomal protein uS19.

It localises to the cytoplasm. In terms of biological role, an accessory protein needed during the final step in the assembly of 30S ribosomal subunit, possibly for assembly of the head region. Essential for efficient processing of 16S rRNA. May be needed both before and after RbfA during the maturation of 16S rRNA. It has affinity for free ribosomal 30S subunits but not for 70S ribosomes. The chain is Ribosome maturation factor RimM from Zymomonas mobilis subsp. mobilis (strain ATCC 31821 / ZM4 / CP4).